Reading from the N-terminus, the 125-residue chain is Holo-[acyl-carrier-protein] synthase (125 aa).

Mg(2+)-binding residues include Asp-8 and Glu-57.

The protein belongs to the P-Pant transferase superfamily. AcpS family. It depends on Mg(2+) as a cofactor.

It is found in the cytoplasm. The catalysed reaction is apo-[ACP] + CoA = holo-[ACP] + adenosine 3',5'-bisphosphate + H(+). Its function is as follows. Transfers the 4'-phosphopantetheine moiety from coenzyme A to a Ser of acyl-carrier-protein. The protein is Holo-[acyl-carrier-protein] synthase of Geotalea daltonii (strain DSM 22248 / JCM 15807 / FRC-32) (Geobacter daltonii).